Reading from the N-terminus, the 398-residue chain is Bifunctional enzyme IspD/IspF (398 aa).

Residues 1–234 form a 2-C-methyl-D-erythritol 4-phosphate cytidylyltransferase region; that stretch reads MANSRRTAAI…SRLAALLGDI (234 aa). A 2-C-methyl-D-erythritol 2,4-cyclodiphosphate synthase region spans residues 235 to 398; it reads RTGTGYDVHA…LPWGPNGLSG (164 aa). Residues Asp241 and His243 each coordinate a divalent metal cation. 4-CDP-2-C-methyl-D-erythritol 2-phosphate-binding positions include 241–243 and 267–268; these read DVH and HS. His275 is a binding site for a divalent metal cation. Residues 289-291, 365-368, Phe372, and Arg375 each bind 4-CDP-2-C-methyl-D-erythritol 2-phosphate; these read DIG and TTSE.

This sequence in the N-terminal section; belongs to the IspD/TarI cytidylyltransferase family. IspD subfamily. It in the C-terminal section; belongs to the IspF family. A divalent metal cation is required as a cofactor.

The catalysed reaction is 2-C-methyl-D-erythritol 4-phosphate + CTP + H(+) = 4-CDP-2-C-methyl-D-erythritol + diphosphate. It carries out the reaction 4-CDP-2-C-methyl-D-erythritol 2-phosphate = 2-C-methyl-D-erythritol 2,4-cyclic diphosphate + CMP. Its pathway is isoprenoid biosynthesis; isopentenyl diphosphate biosynthesis via DXP pathway; isopentenyl diphosphate from 1-deoxy-D-xylulose 5-phosphate: step 2/6. It participates in isoprenoid biosynthesis; isopentenyl diphosphate biosynthesis via DXP pathway; isopentenyl diphosphate from 1-deoxy-D-xylulose 5-phosphate: step 4/6. Its function is as follows. Bifunctional enzyme that catalyzes the formation of 4-diphosphocytidyl-2-C-methyl-D-erythritol from CTP and 2-C-methyl-D-erythritol 4-phosphate (MEP) (IspD), and catalyzes the conversion of 4-diphosphocytidyl-2-C-methyl-D-erythritol 2-phosphate (CDP-ME2P) to 2-C-methyl-D-erythritol 2,4-cyclodiphosphate (ME-CPP) with a corresponding release of cytidine 5-monophosphate (CMP) (IspF). This Rhodopseudomonas palustris (strain BisA53) protein is Bifunctional enzyme IspD/IspF.